The primary structure comprises 600 residues: UvrABC system protein C (600 aa).

The 86-residue stretch at 15–100 (NSAGVYQYFN…IKQLHPKYNI (86 aa)) folds into the GIY-YIG domain. One can recognise a UVR domain in the interval 203-238 (SVLLKNLEKQMLVLAQNENYEEAAKVRDQIAMIKDL).

The protein belongs to the UvrC family. As to quaternary structure, interacts with UvrB in an incision complex.

The protein localises to the cytoplasm. Functionally, the UvrABC repair system catalyzes the recognition and processing of DNA lesions. UvrC both incises the 5' and 3' sides of the lesion. The N-terminal half is responsible for the 3' incision and the C-terminal half is responsible for the 5' incision. The polypeptide is UvrABC system protein C (Campylobacter jejuni (strain RM1221)).